The chain runs to 156 residues: Small ribosomal subunit protein uS7 (156 aa).

It belongs to the universal ribosomal protein uS7 family. As to quaternary structure, part of the 30S ribosomal subunit. Contacts proteins S9 and S11.

One of the primary rRNA binding proteins, it binds directly to 16S rRNA where it nucleates assembly of the head domain of the 30S subunit. Is located at the subunit interface close to the decoding center, probably blocks exit of the E-site tRNA. This Bacillus cytotoxicus (strain DSM 22905 / CIP 110041 / 391-98 / NVH 391-98) protein is Small ribosomal subunit protein uS7.